A 148-amino-acid polypeptide reads, in one-letter code: Phosphoribosyl-AMP cyclohydrolase (148 aa).

Aspartate 91 provides a ligand contact to Mg(2+). Residue cysteine 92 coordinates Zn(2+). Residues aspartate 93 and aspartate 95 each contribute to the Mg(2+) site. Zn(2+) contacts are provided by cysteine 109 and cysteine 116.

The protein belongs to the PRA-CH family. In terms of assembly, homodimer. The cofactor is Mg(2+). Zn(2+) is required as a cofactor.

Its subcellular location is the cytoplasm. The enzyme catalyses 1-(5-phospho-beta-D-ribosyl)-5'-AMP + H2O = 1-(5-phospho-beta-D-ribosyl)-5-[(5-phospho-beta-D-ribosylamino)methylideneamino]imidazole-4-carboxamide. It participates in amino-acid biosynthesis; L-histidine biosynthesis; L-histidine from 5-phospho-alpha-D-ribose 1-diphosphate: step 3/9. Functionally, catalyzes the hydrolysis of the adenine ring of phosphoribosyl-AMP. This is Phosphoribosyl-AMP cyclohydrolase from Rhodopseudomonas palustris (strain HaA2).